Reading from the N-terminus, the 304-residue chain is Dihydroorotate dehydrogenase B (NAD(+)), catalytic subunit (304 aa).

FMN is bound by residues Ser-21 and 45-46 (KA). Substrate is bound by residues Lys-45 and 69-73 (NAIGL). FMN-binding residues include Asn-99 and Asn-127. Residue Asn-127 coordinates substrate. Cys-130 functions as the Nucleophile in the catalytic mechanism. The FMN site is built by Lys-165 and Ile-191. 192–193 (NT) is a binding site for substrate. Residues Gly-217, 243–244 (GG), and 265–266 (GT) each bind FMN.

Belongs to the dihydroorotate dehydrogenase family. Type 1 subfamily. As to quaternary structure, heterotetramer of 2 PyrK and 2 PyrD type B subunits. FMN serves as cofactor.

Its subcellular location is the cytoplasm. The enzyme catalyses (S)-dihydroorotate + NAD(+) = orotate + NADH + H(+). It participates in pyrimidine metabolism; UMP biosynthesis via de novo pathway; orotate from (S)-dihydroorotate (NAD(+) route): step 1/1. In terms of biological role, catalyzes the conversion of dihydroorotate to orotate with NAD(+) as electron acceptor. The chain is Dihydroorotate dehydrogenase B (NAD(+)), catalytic subunit (pyrD) from Listeria monocytogenes serotype 4a (strain HCC23).